The sequence spans 312 residues: Glyoxylate/hydroxypyruvate reductase A (312 aa).

Residue Arg227 is part of the active site. His275 serves as the catalytic Proton donor.

It belongs to the D-isomer specific 2-hydroxyacid dehydrogenase family. GhrA subfamily.

It localises to the cytoplasm. The catalysed reaction is glycolate + NADP(+) = glyoxylate + NADPH + H(+). It carries out the reaction (R)-glycerate + NAD(+) = 3-hydroxypyruvate + NADH + H(+). It catalyses the reaction (R)-glycerate + NADP(+) = 3-hydroxypyruvate + NADPH + H(+). Functionally, catalyzes the NADPH-dependent reduction of glyoxylate and hydroxypyruvate into glycolate and glycerate, respectively. The chain is Glyoxylate/hydroxypyruvate reductase A from Enterobacter sp. (strain 638).